Reading from the N-terminus, the 202-residue chain is UPF0102 protein Dde_1093 (202 aa).

This sequence belongs to the UPF0102 family.

This chain is UPF0102 protein Dde_1093, found in Oleidesulfovibrio alaskensis (strain ATCC BAA-1058 / DSM 17464 / G20) (Desulfovibrio alaskensis).